We begin with the raw amino-acid sequence, 502 residues long: UPF0371 protein CTC_00401 (502 aa).

This sequence belongs to the UPF0371 family.

This Clostridium tetani (strain Massachusetts / E88) protein is UPF0371 protein CTC_00401.